Here is a 100-residue protein sequence, read N- to C-terminus: Urease subunit gamma (100 aa).

It belongs to the urease gamma subunit family. Heterotrimer of UreA (gamma), UreB (beta) and UreC (alpha) subunits. Three heterotrimers associate to form the active enzyme.

It is found in the cytoplasm. The enzyme catalyses urea + 2 H2O + H(+) = hydrogencarbonate + 2 NH4(+). It functions in the pathway nitrogen metabolism; urea degradation; CO(2) and NH(3) from urea (urease route): step 1/1. This Paraburkholderia phymatum (strain DSM 17167 / CIP 108236 / LMG 21445 / STM815) (Burkholderia phymatum) protein is Urease subunit gamma.